The following is a 75-amino-acid chain: Large ribosomal subunit protein bL31 (75 aa).

Positions 16, 18, 37, and 40 each coordinate Zn(2+).

Belongs to the bacterial ribosomal protein bL31 family. Type A subfamily. In terms of assembly, part of the 50S ribosomal subunit. The cofactor is Zn(2+).

Functionally, binds the 23S rRNA. In Legionella pneumophila (strain Paris), this protein is Large ribosomal subunit protein bL31.